The following is a 467-amino-acid chain: Solute carrier family 52, riboflavin transporter, member 3 (467 aa).

The Cytoplasmic portion of the chain corresponds to 1-2; that stretch reads MA. The helical transmembrane segment at 3–23 threads the bilayer; sequence FLIHLLVCTFGMGSWVAINGL. Topologically, residues 24–43 are extracellular; the sequence is WVELPLLVTELPEGWYLPSY. The chain crosses the membrane as a helical span at residues 44 to 64; it reads LTVIIQLANVGPLLVTLLHHF. At 65 to 71 the chain is on the cytoplasmic side; that stretch reads RPGCLSE. A helical membrane pass occupies residues 72–92; the sequence is VAVVFTVLGVGTIACTLFAFL. Residues 93–105 lie on the Extracellular side of the membrane; sequence WNVTSWVLGSRHS. Asn-94 carries an N-linked (GlcNAc...) asparagine glycan. A helical transmembrane segment spans residues 106–126; the sequence is IAFLVLTFFLALVDCTSSVTF. Residues 127 to 137 are Cytoplasmic-facing; the sequence is LPFMSRLPTYY. A helical membrane pass occupies residues 138–158; sequence LTTFFVGEGLSGLLPALVALA. Over 159-220 the chain is Extracellular; it reads QGSGLTTCVN…SRYLPANFSP (62 aa). An N-linked (GlcNAc...) asparagine glycan is attached at Asn-168. The helical transmembrane segment at 221 to 241 threads the bilayer; that stretch reads LVFFLLLSFMMACCFISFFFL. Over 242 to 294 the chain is Cytoplasmic; sequence QRQPKRWEASIEDLLTSQVTLNSIRPQEGKDLGPPEESGKAQDPPEEKTAPQH. Position 251 is a phosphoserine (Ser-251). The segment at 266–288 is disordered; the sequence is RPQEGKDLGPPEESGKAQDPPEE. The span at 268–288 shows a compositional bias: basic and acidic residues; the sequence is QEGKDLGPPEESGKAQDPPEE. A helical membrane pass occupies residues 295–315; it reads LAHLTFIYVLVAFVNALTNGV. Over 316-333 the chain is Extracellular; it reads LPSVQTYSCLSYGPVAYH. Residues 334-354 form a helical membrane-spanning segment; it reads LSATLSSMASPLTCFLSIFLP. At 355-359 the chain is on the cytoplasmic side; the sequence is NRSLP. A helical membrane pass occupies residues 360 to 380; that stretch reads FLGVLAVLGTSFGAYNMAMAV. The Extracellular portion of the chain corresponds to 381–394; the sequence is MSPCPFMQGHWGGE. Residues 395-415 traverse the membrane as a helical segment; that stretch reads VLIVVSWVLFTGCLSYVKVML. Residues 416–425 lie on the Cytoplasmic side of the membrane; sequence GVILRDHSRS. A helical membrane pass occupies residues 426-446; that stretch reads ALLWCGAAVQLGSLLGAVVMF. Topologically, residues 447 to 467 are extracellular; that stretch reads PLVNVLRLFSSADFCSLQCSA.

The protein belongs to the riboflavin transporter family.

The protein localises to the cell membrane. It carries out the reaction riboflavin(in) = riboflavin(out). Its function is as follows. Plasma membrane transporter mediating the uptake by cells of the water soluble vitamin B2/riboflavin that plays a key role in biochemical oxidation-reduction reactions of the carbohydrate, lipid, and amino acid metabolism. The protein is Solute carrier family 52, riboflavin transporter, member 3 (SLC52A3) of Bos taurus (Bovine).